A 435-amino-acid chain; its full sequence is Elongation factor 1-alpha (435 aa).

The tr-type G domain occupies 4 to 229 (KPHLNLIVIG…DMLEIPPKPV (226 aa)). Positions 13 to 20 (GHVDHGKS) are G1. Residue 13 to 20 (GHVDHGKS) coordinates GTP. A Mg(2+)-binding site is contributed by S20. The tract at residues 69–73 (GVTIN) is G2. The tract at residues 90 to 93 (DAPG) is G3. GTP is bound by residues 90-94 (DAPGH) and 152-155 (TKMD). The G4 stretch occupies residues 152-155 (TKMD). The segment at 193–195 (VSI) is G5.

It belongs to the TRAFAC class translation factor GTPase superfamily. Classic translation factor GTPase family. EF-Tu/EF-1A subfamily.

It is found in the cytoplasm. It carries out the reaction GTP + H2O = GDP + phosphate + H(+). Functionally, GTP hydrolase that promotes the GTP-dependent binding of aminoacyl-tRNA to the A-site of ribosomes during protein biosynthesis. This is Elongation factor 1-alpha from Metallosphaera sedula (strain ATCC 51363 / DSM 5348 / JCM 9185 / NBRC 15509 / TH2).